Here is a 311-residue protein sequence, read N- to C-terminus: tRNA-cytidine(32) 2-sulfurtransferase (311 aa).

The PP-loop motif signature appears at Ser47–Ser52. Positions 122, 125, and 213 each coordinate [4Fe-4S] cluster.

This sequence belongs to the TtcA family. Homodimer. The cofactor is Mg(2+). Requires [4Fe-4S] cluster as cofactor.

The protein localises to the cytoplasm. The enzyme catalyses cytidine(32) in tRNA + S-sulfanyl-L-cysteinyl-[cysteine desulfurase] + AH2 + ATP = 2-thiocytidine(32) in tRNA + L-cysteinyl-[cysteine desulfurase] + A + AMP + diphosphate + H(+). The protein operates within tRNA modification. Its function is as follows. Catalyzes the ATP-dependent 2-thiolation of cytidine in position 32 of tRNA, to form 2-thiocytidine (s(2)C32). The sulfur atoms are provided by the cysteine/cysteine desulfurase (IscS) system. This chain is tRNA-cytidine(32) 2-sulfurtransferase, found in Pectobacterium carotovorum subsp. carotovorum (strain PC1).